The following is a 477-amino-acid chain: Protoporphyrinogen oxidase (477 aa).

Residues 9 to 14 (GGGISG), 34 to 35 (ES), W42, 57 to 60 (GPRG), V257, A449, and 454 to 456 (VAV) contribute to the FAD site.

This sequence belongs to the protoporphyrinogen/coproporphyrinogen oxidase family. Protoporphyrinogen oxidase subfamily. Monomer. Homodimer. It depends on FAD as a cofactor. Expressed in heart, brain, placenta, lung, liver, skeletal muscle, kidney and pancreas.

It is found in the mitochondrion inner membrane. The catalysed reaction is protoporphyrinogen IX + 3 O2 = protoporphyrin IX + 3 H2O2. It participates in porphyrin-containing compound metabolism; protoporphyrin-IX biosynthesis; protoporphyrin-IX from protoporphyrinogen-IX: step 1/1. In terms of biological role, catalyzes the 6-electron oxidation of protoporphyrinogen-IX to form protoporphyrin-IX. The protein is Protoporphyrinogen oxidase (PPOX) of Homo sapiens (Human).